A 190-amino-acid chain; its full sequence is MSLFEDLINSKIRELEDLKRNLLVNIETNIRREADAALSKFSAQLANVESEATLERERIIYNAVVEARRKIAEVYDQMLKDLVNAVYEEVDKMRGAERYVKFLTSLLETAEKYVQTKDVVIYASPKDKGVVEAVARNLGLTGIVAEKDIRGGVVVTTRDGSITVDYSLESLIANKIEELKHLLYQMTYER.

This sequence belongs to the V-ATPase E subunit family. In terms of assembly, has multiple subunits with at least A(3), B(3), C, D, E, F, H, I and proteolipid K(x).

The protein resides in the cell membrane. Component of the A-type ATP synthase that produces ATP from ADP in the presence of a proton gradient across the membrane. The chain is A-type ATP synthase subunit E from Pyrobaculum neutrophilum (strain DSM 2338 / JCM 9278 / NBRC 100436 / V24Sta) (Thermoproteus neutrophilus).